A 438-amino-acid polypeptide reads, in one-letter code: Adenylosuccinate synthetase (438 aa).

GTP is bound by residues Gly13 to Lys19 and Gly41 to Thr43. Catalysis depends on Asp14, which acts as the Proton acceptor. Mg(2+) contacts are provided by Asp14 and Gly41. IMP is bound by residues Asp14–Lys17, Asn39–His42, Thr130, Arg144, Gln225, Thr240, and Arg312. His42 serves as the catalytic Proton donor. Residue Ala308–Arg314 coordinates substrate. GTP contacts are provided by residues Arg314, Lys340–Asp342, and Ser422–Gly424.

Belongs to the adenylosuccinate synthetase family. As to quaternary structure, homodimer. Requires Mg(2+) as cofactor.

The protein localises to the cytoplasm. It catalyses the reaction IMP + L-aspartate + GTP = N(6)-(1,2-dicarboxyethyl)-AMP + GDP + phosphate + 2 H(+). It functions in the pathway purine metabolism; AMP biosynthesis via de novo pathway; AMP from IMP: step 1/2. Plays an important role in the de novo pathway of purine nucleotide biosynthesis. Catalyzes the first committed step in the biosynthesis of AMP from IMP. The polypeptide is Adenylosuccinate synthetase (Ruthia magnifica subsp. Calyptogena magnifica).